The following is a 464-amino-acid chain: Soluble pyridine nucleotide transhydrogenase (464 aa).

35 to 44 is an FAD binding site; sequence EASSQVGGSC.

This sequence belongs to the class-I pyridine nucleotide-disulfide oxidoreductase family. It depends on FAD as a cofactor.

Its subcellular location is the cytoplasm. The enzyme catalyses NAD(+) + NADPH = NADH + NADP(+). Its function is as follows. Conversion of NADPH, generated by peripheral catabolic pathways, to NADH, which can enter the respiratory chain for energy generation. This Marinomonas sp. (strain MWYL1) protein is Soluble pyridine nucleotide transhydrogenase.